A 324-amino-acid chain; its full sequence is tRNA U34 carboxymethyltransferase (324 aa).

Residues Lys91, Trp105, Lys110, Gly130, 152 to 154 (DPS), 181 to 182 (IE), Met196, Tyr200, and Arg315 contribute to the carboxy-S-adenosyl-L-methionine site.

It belongs to the class I-like SAM-binding methyltransferase superfamily. CmoB family. As to quaternary structure, homotetramer.

The enzyme catalyses carboxy-S-adenosyl-L-methionine + 5-hydroxyuridine(34) in tRNA = 5-carboxymethoxyuridine(34) in tRNA + S-adenosyl-L-homocysteine + H(+). Functionally, catalyzes carboxymethyl transfer from carboxy-S-adenosyl-L-methionine (Cx-SAM) to 5-hydroxyuridine (ho5U) to form 5-carboxymethoxyuridine (cmo5U) at position 34 in tRNAs. This Aliivibrio salmonicida (strain LFI1238) (Vibrio salmonicida (strain LFI1238)) protein is tRNA U34 carboxymethyltransferase.